Reading from the N-terminus, the 494-residue chain is Casein kinase I homolog HRR25 (494 aa).

The Protein kinase domain maps to Phe9–Ile278. Residues Ile15–Ile23 and Lys38 each bind ATP. Asp128 functions as the Proton acceptor in the catalytic mechanism. A Phosphoserine modification is found at Ser143. Positions Arg394–Leu494 are disordered. 2 stretches are compositionally biased toward low complexity: residues Gln395–Pro418 and Gln432–Gln444. Residues Val445–Pro479 show a composition bias toward polar residues.

Belongs to the protein kinase superfamily. CK1 Ser/Thr protein kinase family. Casein kinase I subfamily. Interacts with HRI1. Interacts with ELP1/IKI3; the interaction leads to ELP1/IKI3 phosphorylation.

It localises to the cytoplasm. Its subcellular location is the nucleus. It is found in the nucleolus. The protein resides in the nucleoplasm. The catalysed reaction is L-seryl-[protein] + ATP = O-phospho-L-seryl-[protein] + ADP + H(+). The enzyme catalyses L-threonyl-[protein] + ATP = O-phospho-L-threonyl-[protein] + ADP + H(+). In terms of biological role, protein kinase which phosphorylates serine and threonine residues. Can use casein as a substrate. Phosphorylates elongator complex member ELP1/IKI3 on 'Ser-1198' and 'Ser-1202' which promotes the tRNA modification function of the complex. Associated with repair of damaged DNA and meiosis. The chain is Casein kinase I homolog HRR25 (HRR25) from Saccharomyces cerevisiae (strain ATCC 204508 / S288c) (Baker's yeast).